Consider the following 261-residue polypeptide: Putative [LysW]-aminoadipate/[LysW]-glutamate kinase (261 aa).

Residues 35–36 (GG), Arg62, and Asn162 each bind substrate.

The protein belongs to the acetylglutamate kinase family. LysZ subfamily.

The protein localises to the cytoplasm. It catalyses the reaction [amino-group carrier protein]-C-terminal-N-(1,4-dicarboxybutan-1-yl)-L-glutamine + ATP = [amino-group carrier protein]-C-terminal-N-(1-carboxy-5-phosphooxy-5-oxopentan-1-yl)-L-glutamine + ADP. The enzyme catalyses [amino-group carrier protein]-C-terminal-gamma-(L-glutamyl)-L-glutamate + ATP = [amino-group carrier protein]-C-terminal-gamma-(5-phospho-L-glutamyl)-L-glutamate + ADP. Its pathway is amino-acid biosynthesis; L-lysine biosynthesis via AAA pathway; L-lysine from L-alpha-aminoadipate (Thermus route): step 2/5. It participates in amino-acid biosynthesis; L-arginine biosynthesis. Involved in both the arginine and lysine biosynthetic pathways. Phosphorylates the LysW-bound precursors glutamate (for arginine biosynthesis), respectively alpha-aminoadipate (for lysine biosynthesis). This Pyrobaculum aerophilum (strain ATCC 51768 / DSM 7523 / JCM 9630 / CIP 104966 / NBRC 100827 / IM2) protein is Putative [LysW]-aminoadipate/[LysW]-glutamate kinase.